Reading from the N-terminus, the 124-residue chain is Ribonuclease pancreatic (124 aa).

The tract at residues Arg-1 to Pro-23 is disordered. Residues Lys-7 and Arg-10 each contribute to the substrate site. The active-site Proton acceptor is His-12. The span at Asp-14–Pro-23 shows a compositional bias: polar residues. 4 disulfide bridges follow: Cys-26/Cys-84, Cys-40/Cys-95, Cys-58/Cys-110, and Cys-65/Cys-72. Substrate is bound by residues Lys-41–Thr-45 and Lys-66. Residue Asn-76 is glycosylated (N-linked (GlcNAc...) asparagine; partial). Arg-85 is a substrate binding site. His-119 acts as the Proton donor in catalysis.

It belongs to the pancreatic ribonuclease family. Monomer. Interacts with and forms tight 1:1 complexes with RNH1. Dimerization of two such complexes may occur. Interaction with RNH1 inhibits this protein. As to expression, pancreas.

The protein resides in the secreted. It carries out the reaction an [RNA] containing cytidine + H2O = an [RNA]-3'-cytidine-3'-phosphate + a 5'-hydroxy-ribonucleotide-3'-[RNA].. It catalyses the reaction an [RNA] containing uridine + H2O = an [RNA]-3'-uridine-3'-phosphate + a 5'-hydroxy-ribonucleotide-3'-[RNA].. Functionally, endonuclease that catalyzes the cleavage of RNA on the 3' side of pyrimidine nucleotides. Acts on single-stranded and double-stranded RNA. In Balaenoptera acutorostrata (Common minke whale), this protein is Ribonuclease pancreatic (RNASE1).